A 270-amino-acid chain; its full sequence is Phosphatidylglycerol--prolipoprotein diacylglyceryl transferase (270 aa).

4 helical membrane passes run 19 to 39 (FPVY…LWLA), 54 to 74 (IDLV…YYVI), 92 to 112 (QGGL…ILFA), and 116 to 136 (GLSF…GQAI). Arginine 138 provides a ligand contact to a 1,2-diacyl-sn-glycero-3-phospho-(1'-sn-glycerol). A run of 3 helical transmembrane segments spans residues 178-198 (HPTF…LLAL), 206-226 (GELF…VEGL), and 236-256 (LRIA…FIIV).

The protein belongs to the Lgt family.

Its subcellular location is the cell membrane. It carries out the reaction L-cysteinyl-[prolipoprotein] + a 1,2-diacyl-sn-glycero-3-phospho-(1'-sn-glycerol) = an S-1,2-diacyl-sn-glyceryl-L-cysteinyl-[prolipoprotein] + sn-glycerol 1-phosphate + H(+). It participates in protein modification; lipoprotein biosynthesis (diacylglyceryl transfer). In terms of biological role, catalyzes the transfer of the diacylglyceryl group from phosphatidylglycerol to the sulfhydryl group of the N-terminal cysteine of a prolipoprotein, the first step in the formation of mature lipoproteins. This chain is Phosphatidylglycerol--prolipoprotein diacylglyceryl transferase, found in Bacillus mycoides (strain KBAB4) (Bacillus weihenstephanensis).